We begin with the raw amino-acid sequence, 483 residues long: SWI/SNF-related matrix-associated actin-dependent regulator of chromatin subfamily D member 3 (483 aa).

N-acetylalanine is present on Ala-2. Positions 27 to 102 are disordered; that stretch reads RPGMPSGARM…ARSRSAKRRK (76 aa). The segment covering 78 to 88 has biased composition (low complexity); that stretch reads QSQAQGQGQPV. Ser-178 is subject to Phosphoserine. An SWIB/MDM2 domain is found at 258-335; sequence YQPPQFKLDP…PQRLTALLLP (78 aa).

Belongs to the SMARCD family. In terms of assembly, component of the multiprotein chromatin-remodeling complexes SWI/SNF: SWI/SNF-A (BAF), SWI/SNF-B (PBAF) and related complexes. The canonical complex contains a catalytic subunit (either SMARCA4/BRG1/BAF190A or SMARCA2/BRM/BAF190B) and at least SMARCE1, ACTL6A/BAF53, SMARCC1/BAF155, SMARCC2/BAF170, and SMARCB1/SNF5/BAF47. Other subunits specific to each of the complexes may also be present permitting several possible combinations developmentally and tissue specific. Component of the BAF complex, which includes at least actin (ACTB), ARID1A/BAF250A, ARID1B/BAF250B, SMARCA2/BRM, SMARCA4/BRG1/BAF190A, ACTL6A/BAF53, ACTL6B/BAF53B, SMARCE1/BAF57, SMARCC1/BAF155, SMARCC2/BAF170, SMARCB1/SNF5/INI1, and one or more SMARCD1/BAF60A, SMARCD2/BAF60B, or SMARCD3/BAF60C. In muscle cells, the BAF complex also contains DPF3. Component of neural progenitors-specific chromatin remodeling complex (npBAF complex) composed of at least, ARID1A/BAF250A or ARID1B/BAF250B, SMARCD1/BAF60A, SMARCD3/BAF60C, SMARCA2/BRM/BAF190B, SMARCA4/BRG1/BAF190A, SMARCB1/BAF47, SMARCC1/BAF155, SMARCE1/BAF57, SMARCC2/BAF170, PHF10/BAF45A, ACTL6A/BAF53A and actin. Component of neuron-specific chromatin remodeling complex (nBAF complex) composed of at least, ARID1A/BAF250A or ARID1B/BAF250B, SMARCD1/BAF60A, SMARCD3/BAF60C, SMARCA2/BRM/BAF190B, SMARCA4/BRG1/BAF190A, SMARCB1/BAF47, SMARCC1/BAF155, SMARCE1/BAF57, SMARCC2/BAF170, DPF1/BAF45B, DPF3/BAF45C, ACTL6B/BAF53B and actin. May be a component of the SWI/SNF-B (PBAF) chromatin remodeling complex, at least composed of SMARCA4/BRG1, SMARCB1/BAF47/SNF5, ACTL6A/BAF53A or ACTL6B/BAF53B, SMARCE1/BAF57, SMARCD1/BAF60A, SMARCD2/BAF60B, perhaps SMARCD3/BAF60C, SMARCC1/BAF155, SMARCC2/BAF170, PBRM1/BAF180, ARID2/BAF200 and actin. Component of SWI/SNF (GBAF) subcomplex, which includes at least BICRA or BICRAL (mutually exclusive), BRD9, SS18, SMARCA2/BRM, SMARCA4/BRG1/BAF190A, ACTL6A/BAF53, SMARCC1/BAF155, and SMARCD1/BAF60A. Interacts with SMARCA4/BRG1/BAF190A. The precise distribution of the related SMARCD1, SMARCD2 and SMARCD3 proteins among these and other SWI/SNF nucleosome-remodeling complexes is not fully known. May allow recruitment of SWI/SNF containing complexes specifically to promoters where these factors are located. Also interacts with several nuclear receptors including PPARG/NR1C3, RXRA/NR1F1, ESR1, NR5A1, NR5A2/LRH1 and other transcriptional activators including the HLH protein SREBF1/SREBP1 and the homeobox protein PBX1. Interacts with PRDM1/BLIMP1. As to expression, ubiquitously expressed.

Its subcellular location is the nucleus. Functionally, involved in transcriptional activation and repression of select genes by chromatin remodeling (alteration of DNA-nucleosome topology). Component of SWI/SNF chromatin remodeling complexes that carry out key enzymatic activities, changing chromatin structure by altering DNA-histone contacts within a nucleosome in an ATP-dependent manner. Stimulates nuclear receptor mediated transcription. Belongs to the neural progenitors-specific chromatin remodeling complex (npBAF complex) and the neuron-specific chromatin remodeling complex (nBAF complex). During neural development a switch from a stem/progenitor to a postmitotic chromatin remodeling mechanism occurs as neurons exit the cell cycle and become committed to their adult state. The transition from proliferating neural stem/progenitor cells to postmitotic neurons requires a switch in subunit composition of the npBAF and nBAF complexes. As neural progenitors exit mitosis and differentiate into neurons, npBAF complexes which contain ACTL6A/BAF53A and PHF10/BAF45A, are exchanged for homologous alternative ACTL6B/BAF53B and DPF1/BAF45B or DPF3/BAF45C subunits in neuron-specific complexes (nBAF). The npBAF complex is essential for the self-renewal/proliferative capacity of the multipotent neural stem cells. The nBAF complex along with CREST plays a role regulating the activity of genes essential for dendrite growth. This Mus musculus (Mouse) protein is SWI/SNF-related matrix-associated actin-dependent regulator of chromatin subfamily D member 3 (Smarcd3).